A 342-amino-acid chain; its full sequence is AM-toxin biosynthesis protein 12 (342 aa).

Residues 1–20 (MSLLITSLAWGALLDPEVSS) form the signal peptide.

Its pathway is mycotoxin biosynthesis. Part of the gene clusters that mediate the biosynthesis of AM-toxins, host-selective toxins (HSTs) causing Alternaria blotch on apple, a worldwide distributed disease. AM-toxins are cyclic depsipeptides containing the 3 residues 2-hydroxy-isovaleric acid (2-HIV), dehydroalanine, L-alanine which are common for all 3 AM-toxins I to III. The fourth precursor is L-alpha-amino-methoxyphenyl-valeric acid (L-Amv) for AM-toxin I, L-alpha-amino-phenyl-valeric acid (L-Apv) for AM-toxin II, and L-alpha-amino-hydroxyphenyl-valeric acid (L-Ahv) for AM-toxin III. AM-toxins have two target sites for affecting susceptible apple cells; they cause invagination of the plasma membrane and electrolyte loss and chloroplast disorganization. The non-ribosomal peptide synthetase AMT1 contains 4 catalytic modules and is responsible for activation of each residue in AM-toxin. The aldo-keto reductase AMT2 catalyzes the conversion of 2-keto-isovaleric acid (2-KIV) to 2-hydroxy-isovaleric acid (2-HIV), one of the precursor residues incorporated by AMT1 during AM-toxin biosynthesis, by reduction of its ketone to an alcohol. The cytochrome P450 monooxygenase AMT3 and the thioesterase AMT4 are also important for AM-toxin production, but their exact function within the AM-toxin biosynthesis are not known yet. Up to 21 proteins (including AMT1 to AMT4) are predicted to be involved in AM-toxin biosynthesis since their expression ishighly up-regulated in AM-toxin-producing cultures. The chain is AM-toxin biosynthesis protein 12 from Alternaria alternata (Alternaria rot fungus).